An 880-amino-acid chain; its full sequence is Alanine--tRNA ligase (880 aa).

Zn(2+) is bound by residues His-563, His-567, Cys-665, and His-669.

Belongs to the class-II aminoacyl-tRNA synthetase family. Zn(2+) serves as cofactor.

The protein localises to the cytoplasm. It catalyses the reaction tRNA(Ala) + L-alanine + ATP = L-alanyl-tRNA(Ala) + AMP + diphosphate. In terms of biological role, catalyzes the attachment of alanine to tRNA(Ala) in a two-step reaction: alanine is first activated by ATP to form Ala-AMP and then transferred to the acceptor end of tRNA(Ala). Also edits incorrectly charged Ser-tRNA(Ala) and Gly-tRNA(Ala) via its editing domain. The sequence is that of Alanine--tRNA ligase from Desulforudis audaxviator (strain MP104C).